Consider the following 215-residue polypeptide: Ribonuclease T (215 aa).

The Exonuclease domain maps to Val-21–Phe-195. Mg(2+)-binding residues include Asp-24, Glu-26, His-182, and Asp-187. The active-site Proton donor/acceptor is the His-182.

This sequence belongs to the RNase T family. In terms of assembly, homodimer. Mg(2+) is required as a cofactor.

In terms of biological role, trims short 3' overhangs of a variety of RNA species, leaving a one or two nucleotide 3' overhang. Responsible for the end-turnover of tRNA: specifically removes the terminal AMP residue from uncharged tRNA (tRNA-C-C-A). Also appears to be involved in tRNA biosynthesis. This chain is Ribonuclease T, found in Wigglesworthia glossinidia brevipalpis.